The chain runs to 446 residues: Maturase K (446 aa).

The protein belongs to the intron maturase 2 family. MatK subfamily.

It localises to the plastid. Its subcellular location is the chloroplast. Usually encoded in the trnK tRNA gene intron. Probably assists in splicing its own and other chloroplast group II introns. This Phalaenopsis aphrodite subsp. formosana (Moth orchid) protein is Maturase K.